The chain runs to 350 residues: MKPQLESLGVYKAGLSEEALKRKFNVEGEFSRLASNENPIGPSPQVYEAIRSQDALNYYPDPEAIQLKASLSEFYQVDSEQILVGAGLDEIIMMISRARLNPKGHILTSEGTFIQYTTHALIEDNEVVSIPLKEGKFDLESFKDKMNDETSIIWICNPNNPTGTYVTETELTGFLESVHEDVMVVLDEAYFEFVLREDYPDGVALLKRFPNLIVLRTFSKAYGLAGLRVGYAITSKAYIDVFNKVKLPFNVTALSLVGAIAALKDQQYLKDYVAHNDKERNKFFEADYKEHLIDSVTNFIFVKTNQPEALFEALIKGGVIARPMPNGVRISIGTRDDNEKVHKVINSFFS.

Residue Lys-220 is modified to N6-(pyridoxal phosphate)lysine.

It belongs to the class-II pyridoxal-phosphate-dependent aminotransferase family. Histidinol-phosphate aminotransferase subfamily. Homodimer. Pyridoxal 5'-phosphate is required as a cofactor.

It catalyses the reaction L-histidinol phosphate + 2-oxoglutarate = 3-(imidazol-4-yl)-2-oxopropyl phosphate + L-glutamate. It participates in amino-acid biosynthesis; L-histidine biosynthesis; L-histidine from 5-phospho-alpha-D-ribose 1-diphosphate: step 7/9. The protein is Histidinol-phosphate aminotransferase of Macrococcus caseolyticus (strain JCSC5402) (Macrococcoides caseolyticum).